A 433-amino-acid polypeptide reads, in one-letter code: Glutamate--tRNA ligase (433 aa).

The 'HIGH' region motif lies at 10 to 20 (PSPTGYLHIGG). The 'KMSKS' region motif lies at 211–215 (KMSKR). Residue Lys214 participates in ATP binding.

It belongs to the class-I aminoacyl-tRNA synthetase family. Glutamate--tRNA ligase type 1 subfamily. In terms of assembly, monomer.

The protein localises to the cytoplasm. The enzyme catalyses tRNA(Glu) + L-glutamate + ATP = L-glutamyl-tRNA(Glu) + AMP + diphosphate. In terms of biological role, catalyzes the attachment of glutamate to tRNA(Glu) in a two-step reaction: glutamate is first activated by ATP to form Glu-AMP and then transferred to the acceptor end of tRNA(Glu). This chain is Glutamate--tRNA ligase, found in Akkermansia muciniphila (strain ATCC BAA-835 / DSM 22959 / JCM 33894 / BCRC 81048 / CCUG 64013 / CIP 107961 / Muc).